The chain runs to 177 residues: Nucleoside triphosphate/diphosphate phosphatase (177 aa).

Residue arginine 23 is the Proton donor of the active site. Asparagine 87, aspartate 103, aspartate 105, aspartate 107, aspartate 120, and glutamate 123 together coordinate Mg(2+).

It belongs to the Ntdp family. Mg(2+) serves as cofactor.

It carries out the reaction a ribonucleoside 5'-triphosphate + H2O = a ribonucleoside 5'-diphosphate + phosphate + H(+). The catalysed reaction is a ribonucleoside 5'-diphosphate + H2O = a ribonucleoside 5'-phosphate + phosphate + H(+). In terms of biological role, has nucleoside phosphatase activity towards nucleoside triphosphates and nucleoside diphosphates. The chain is Nucleoside triphosphate/diphosphate phosphatase from Streptococcus uberis (strain ATCC BAA-854 / 0140J).